The sequence spans 519 residues: NADH-ubiquinone oxidoreductase chain 4 (519 aa).

Transmembrane regions (helical) follow at residues 2–22 (SGLL…ILSF), 68–88 (IAFI…ILFD), 112–132 (VDGL…IALI), 146–166 (LIII…LDVL), 167–187 (LFYI…GLFG), 196–216 (FYIF…ILTM), 239–259 (IFLF…VFLN), 270–290 (PLGG…YGIF), 304–324 (YTSI…FSTL), 333–353 (IAYS…SNII), 360–380 (ILLG…AGGV), 399–419 (VMPL…GAPL), 437–457 (LPLL…YTIY), and 484–504 (FFLL…PSFI).

Belongs to the complex I subunit 4 family.

It is found in the mitochondrion membrane. The catalysed reaction is a ubiquinone + NADH + 5 H(+)(in) = a ubiquinol + NAD(+) + 4 H(+)(out). Functionally, core subunit of the mitochondrial membrane respiratory chain NADH dehydrogenase (Complex I) that is believed to belong to the minimal assembly required for catalysis. Complex I functions in the transfer of electrons from NADH to the respiratory chain. The immediate electron acceptor for the enzyme is believed to be ubiquinone. The protein is NADH-ubiquinone oxidoreductase chain 4 (ND4) of Podospora anserina (strain S / ATCC MYA-4624 / DSM 980 / FGSC 10383) (Pleurage anserina).